The following is a 252-amino-acid chain: Phosphomannomutase (252 aa).

D13 serves as the catalytic Nucleophile. 2 residues coordinate Mg(2+): D13 and D15. The Proton donor/acceptor role is filled by D15. Alpha-D-mannose 1-phosphate is bound by residues R22, R124, R135, R142, S180, and D182. Residues D208, Y220, and T225 each coordinate Mg(2+).

Belongs to the eukaryotic PMM family. In terms of assembly, homodimer. Requires Mg(2+) as cofactor. In terms of tissue distribution, expressed in roots, stems, leaves, flowers and immature fruits.

The protein resides in the cytoplasm. It carries out the reaction alpha-D-mannose 1-phosphate = D-mannose 6-phosphate. The protein operates within nucleotide-sugar biosynthesis; GDP-alpha-D-mannose biosynthesis; alpha-D-mannose 1-phosphate from D-fructose 6-phosphate: step 2/2. Functionally, catalyzes the interconversion of mannose-6-phosphate to mannose-1-phosphate, the precursor for the synthesis of GDP-mannose. GDP-mannose is an essential sugar nucleotide for the synthesis of D-mannose-containing cell wall polysaccharides (galactomannans and glucomannans), glycolipids, glycoproteins and the antioxidant L-ascorbate. Can complement the yeast temperature-sensitive mutant sec53-6. In Nicotiana benthamiana, this protein is Phosphomannomutase.